A 118-amino-acid chain; its full sequence is MARIAGINIPVHKHTVIALSSIYGIGLSRARKICGAVGVPSDKKIRDLSDNELEGLRAEVAKYPVEGDLRREISMDIKRLMDLGCYRGIRHRRGLPVRGQRTQTNARTRKGPRRLARK.

Residues 94-118 are disordered; sequence GLPVRGQRTQTNARTRKGPRRLARK. Positions 107 to 118 are enriched in basic residues; sequence RTRKGPRRLARK.

It belongs to the universal ribosomal protein uS13 family. Part of the 30S ribosomal subunit. Forms a loose heterodimer with protein S19. Forms two bridges to the 50S subunit in the 70S ribosome.

Located at the top of the head of the 30S subunit, it contacts several helices of the 16S rRNA. In the 70S ribosome it contacts the 23S rRNA (bridge B1a) and protein L5 of the 50S subunit (bridge B1b), connecting the 2 subunits; these bridges are implicated in subunit movement. Contacts the tRNAs in the A and P-sites. The protein is Small ribosomal subunit protein uS13 of Nitrosococcus oceani (strain ATCC 19707 / BCRC 17464 / JCM 30415 / NCIMB 11848 / C-107).